Here is a 258-residue protein sequence, read N- to C-terminus: Type III pantothenate kinase (258 aa).

Residue 6–13 coordinates ATP; it reads DVGNTNIV. Residues Y100 and 107-110 each bind substrate; that span reads GADR. The active-site Proton acceptor is the D109. D129 contributes to the K(+) binding site. An ATP-binding site is contributed by T132. Residue T184 coordinates substrate.

The protein belongs to the type III pantothenate kinase family. Homodimer. It depends on NH4(+) as a cofactor. Requires K(+) as cofactor.

It localises to the cytoplasm. The catalysed reaction is (R)-pantothenate + ATP = (R)-4'-phosphopantothenate + ADP + H(+). The protein operates within cofactor biosynthesis; coenzyme A biosynthesis; CoA from (R)-pantothenate: step 1/5. Catalyzes the phosphorylation of pantothenate (Pan), the first step in CoA biosynthesis. The protein is Type III pantothenate kinase of Desulfitobacterium hafniense (strain DSM 10664 / DCB-2).